The primary structure comprises 473 residues: Photosystem II CP43 reaction center protein (473 aa).

A propeptide spanning residues 1-14 is cleaved from the precursor; that stretch reads MKTLYSLRRFYPVE. Thr-15 carries the post-translational modification N-acetylthreonine. Thr-15 carries the post-translational modification Phosphothreonine. Helical transmembrane passes span 69–93, 134–155, 178–200, 255–275, and 291–312; these read LFEVAHFVPEKPMYEQGLILLPHLA, LIGPETLEESFPFFGYVWKDKN, KALYFGGVYDTWAPGGGDVRKIT, KPFAWARRAFIWSGEAYLSYS, and WFNNTAYPSEFYGPTGPEASQA. Glu-367 contacts [CaMn4O5] cluster. The helical transmembrane segment at 447–471 threads the bilayer; sequence RARAAAAGFEKGIDRDTEPVLSMTP.

The protein belongs to the PsbB/PsbC family. PsbC subfamily. As to quaternary structure, PSII is composed of 1 copy each of membrane proteins PsbA, PsbB, PsbC, PsbD, PsbE, PsbF, PsbH, PsbI, PsbJ, PsbK, PsbL, PsbM, PsbT, PsbX, PsbY, PsbZ, Psb30/Ycf12, at least 3 peripheral proteins of the oxygen-evolving complex and a large number of cofactors. It forms dimeric complexes. Binds multiple chlorophylls and provides some of the ligands for the Ca-4Mn-5O cluster of the oxygen-evolving complex. It may also provide a ligand for a Cl- that is required for oxygen evolution. PSII binds additional chlorophylls, carotenoids and specific lipids. is required as a cofactor.

Its subcellular location is the plastid. The protein localises to the chloroplast thylakoid membrane. Functionally, one of the components of the core complex of photosystem II (PSII). It binds chlorophyll and helps catalyze the primary light-induced photochemical processes of PSII. PSII is a light-driven water:plastoquinone oxidoreductase, using light energy to abstract electrons from H(2)O, generating O(2) and a proton gradient subsequently used for ATP formation. This Angiopteris evecta (Mule's foot fern) protein is Photosystem II CP43 reaction center protein.